The following is a 223-amino-acid chain: MSDEEARQSGGSSQAGVVTVSDVQELMRRKEEIEAQIKANYDVLESQKGIGMNEPLVDCEGYPRSDVDLYQVRTARHNIICLQNDHKAVMKQVEEALHQLHARDKEKQARDMAEAHKEAMSRKLGQSESQGPPRAFAKVNSISPGSPASIAGLQVDDEIVEFGSVNTQNFQSLHNIGSVVQHSEGKPLNVTVIRRGEKHQLRLVPTRWAGKGLLGCNIIPLQR.

The span at 103-121 shows a compositional bias: basic and acidic residues; that stretch reads RDKEKQARDMAEAHKEAMS. Residues 103–141 are disordered; it reads RDKEKQARDMAEAHKEAMSRKLGQSESQGPPRAFAKVNS. The region spanning 108–195 is the PDZ domain; it reads QARDMAEAHK…KPLNVTVIRR (88 aa). S129 bears the Phosphoserine mark.

This sequence belongs to the proteasome subunit p27 family. As to quaternary structure, interacts with PSMC3. Part of a transient complex (modulator) containing PSMD9, PSMC6 and PSMC3 formed during the assembly of the 26S proteasome. As to expression, expressed in all tissues tested, highly expressed in liver and kidney.

Acts as a chaperone during the assembly of the 26S proteasome, specifically of the base subcomplex of the PA700/19S regulatory complex (RC). During the base subcomplex assembly is part of an intermediate PSMD9:PSMC6:PSMC3 module, also known as modulator trimer complex; PSMD9 is released during the further base assembly process. This Homo sapiens (Human) protein is 26S proteasome non-ATPase regulatory subunit 9 (PSMD9).